The following is a 1025-amino-acid chain: Error-prone DNA polymerase (1025 aa).

The protein belongs to the DNA polymerase type-C family. DnaE2 subfamily.

Its subcellular location is the cytoplasm. The catalysed reaction is DNA(n) + a 2'-deoxyribonucleoside 5'-triphosphate = DNA(n+1) + diphosphate. DNA polymerase involved in damage-induced mutagenesis and translesion synthesis (TLS). It is not the major replicative DNA polymerase. The protein is Error-prone DNA polymerase of Alkalilimnicola ehrlichii (strain ATCC BAA-1101 / DSM 17681 / MLHE-1).